The primary structure comprises 251 residues: Cathelicidin-B1 (251 aa).

Positions 1–20 are cleaved as a signal peptide; that stretch reads MGRMWASEVLLLLLLGSSRA. A propeptide spanning residues 21–211 is cleaved from the precursor; it reads VTPGLDVSTA…ELRCRPLRPQ (191 aa). The segment at 29 to 109 is disordered; sequence TAPGLDGSIP…TITPKQDGSI (81 aa). Cystine bridges form between cysteine 172/cysteine 181 and cysteine 189/cysteine 205.

The protein belongs to the cathelicidin family. As to expression, detected in bursa of Fabricius, in filamentous structures surrounding the basal and lateral surfaces of bursal M cells (at protein level). Detected in bursa of Fabricius, in secretory enterocytes of the interfollicular bursal epithelium, but not in M cells.

Its subcellular location is the secreted. Has potent antimicrobial activity against Gram-positive and Gram-negative bacteria (in vitro). May play a role in the innate immune response. The sequence is that of Cathelicidin-B1 (CATHB1) from Gallus gallus (Chicken).